The primary structure comprises 220 residues: 7-cyano-7-deazaguanine synthase (220 aa).

7-17 contacts ATP; that stretch reads ISGGMDSSTAA. 4 residues coordinate Zn(2+): C187, C195, C198, and C201.

It belongs to the QueC family. Zn(2+) serves as cofactor.

It carries out the reaction 7-carboxy-7-deazaguanine + NH4(+) + ATP = 7-cyano-7-deazaguanine + ADP + phosphate + H2O + H(+). It participates in purine metabolism; 7-cyano-7-deazaguanine biosynthesis. Functionally, catalyzes the ATP-dependent conversion of 7-carboxy-7-deazaguanine (CDG) to 7-cyano-7-deazaguanine (preQ(0)). The chain is 7-cyano-7-deazaguanine synthase from Campylobacter hominis (strain ATCC BAA-381 / DSM 21671 / CCUG 45161 / LMG 19568 / NCTC 13146 / CH001A).